We begin with the raw amino-acid sequence, 130 residues long: Ribonuclease P protein component (130 aa).

Belongs to the RnpA family. In terms of assembly, consists of a catalytic RNA component (M1 or rnpB) and a protein subunit.

The catalysed reaction is Endonucleolytic cleavage of RNA, removing 5'-extranucleotides from tRNA precursor.. RNaseP catalyzes the removal of the 5'-leader sequence from pre-tRNA to produce the mature 5'-terminus. It can also cleave other RNA substrates such as 4.5S RNA. The protein component plays an auxiliary but essential role in vivo by binding to the 5'-leader sequence and broadening the substrate specificity of the ribozyme. The protein is Ribonuclease P protein component of Desulfovibrio desulfuricans (strain ATCC 27774 / DSM 6949 / MB).